Consider the following 960-residue polypeptide: Phosphoenolpyruvate carboxylase 3 (960 aa).

The residue at position 8 (S8) is a Phosphoserine. Residues H167 and K597 contribute to the active site.

It belongs to the PEPCase type 1 family. As to quaternary structure, homotetramer. Mg(2+) is required as a cofactor.

It localises to the cytoplasm. The catalysed reaction is oxaloacetate + phosphate = phosphoenolpyruvate + hydrogencarbonate. It functions in the pathway photosynthesis; C4 acid pathway. By light-reversible phosphorylation. Through the carboxylation of phosphoenolpyruvate (PEP) it forms oxaloacetate, a four-carbon dicarboxylic acid source for the tricarboxylic acid cycle. In Sorghum bicolor (Sorghum), this protein is Phosphoenolpyruvate carboxylase 3.